The primary structure comprises 461 residues: Homocitrate synthase (461 aa).

The Pyruvate carboxyltransferase domain occupies 4–259; the sequence is VGILDSTLRE…IEVVKLDKLQ (256 aa). Arg12 provides a ligand contact to 2-oxoglutarate. Glu13 provides a ligand contact to Mg(2+). 2-oxoglutarate is bound by residues His76, Arg136, and Thr170. Residues His198 and His200 each contribute to the Mg(2+) site. His292 serves as the catalytic Proton acceptor.

The protein belongs to the alpha-IPM synthase/homocitrate synthase family. Homocitrate synthase LYS20/LYS21 subfamily. The cofactor is Mg(2+). Mn(2+) is required as a cofactor.

The enzyme catalyses acetyl-CoA + 2-oxoglutarate + H2O = (2R)-homocitrate + CoA + H(+). The protein operates within amino-acid biosynthesis; L-lysine biosynthesis via AAA pathway; L-alpha-aminoadipate from 2-oxoglutarate: step 1/5. Its function is as follows. Catalyzes the aldol-type condensation of 2-oxoglutarate with acetyl-CoA to yield homocitrate. Carries out the first step of the alpha-aminoadipate (AAA) lysine biosynthesis pathway. The protein is Homocitrate synthase of Saccharolobus islandicus (strain L.S.2.15 / Lassen #1) (Sulfolobus islandicus).